The primary structure comprises 703 residues: MAKRDYFCFVVLFLSSVSAVIDDPQNKQVYVVYMGSLPSLLEYTPLSHHMSILQEVTGDSSVEGRLVRSYKRSFNGFAARLTESERIRVAEMEGVVSVFPNINYKLQTTASWDFLGLKEGKNTKRNLAIESDTIIGFIDSGIWPESESFSDKGFGPPPKKWKGVCSGGKNFTCNNKLIGARDYTSEGTRDLQGHGTHTASTAAGNAVADASFFGIGNGTARGGVPASRIAAYKVCSEKDCTAASLLSAFDDAIADGVDLISISLASEFPQKYYKDAIAIGAFHANVKGILTVNSAGNSGSFPSTTASVAPWILSVAASNTNRGFFTKVVLGNGKTLVGRSVNSFDLKGKKYPLVYGDNFNESLVQGKILVSKFPTSSKVAVGSILIDDYQHYALLSSKPFSLLPPDDFDSLVSYINSTRSPQGTFLKTEAFFNQTAPTVASFSSRGPNFIAVDLLKPDISAPGVEILAAYSPLGSPSEEESDKRRVKYSVMSGTSMSCPHVAGVAAYIRTFHPKWSPSVIQSAIMTTAWPMKPNRPGFASTEFAYGAGHVDQIAAINPGLVYELDKADHIAFLCGLNYTSKTLHLIAGEAVTCSGNTLPRNLNYPSMSAKIDGYNSSFTVTFKRTVTNLGTPNSTYKSKIVLNHGAKLVKVSPSVLSFKRVNEKQSFTVTFSGNLNLNLPTSANLIWSDGTHNVRSVIVVYTT.

The N-terminal stretch at 1-19 (MAKRDYFCFVVLFLSSVSA) is a signal peptide. Positions 20–107 (VIDDPQNKQV…VFPNINYKLQ (88 aa)) are cleaved as a propeptide — activation peptide. Residues 29–106 (VYVVYMGSLP…SVFPNINYKL (78 aa)) enclose the Inhibitor I9 domain. In terms of domain architecture, Peptidase S8 spans 111–556 (SWDFLGLKEG…AGHVDQIAAI (446 aa)). The Charge relay system role is filled by Asp-139. A glycan (N-linked (GlcNAc...) asparagine) is linked at Asn-170. The Charge relay system role is filled by His-194. Asn-217, Asn-360, Asn-416, and Asn-433 each carry an N-linked (GlcNAc...) asparagine glycan. The PA domain occupies 350-411 (KYPLVYGDNF…LLPPDDFDSL (62 aa)). The active-site Charge relay system is the Ser-495. N-linked (GlcNAc...) asparagine glycans are attached at residues Asn-577, Asn-615, and Asn-633.

The protein belongs to the peptidase S8 family. Post-translationally, the C-terminal propeptide is autocleaved.

It localises to the secreted. The polypeptide is Subtilisin-like protease SBT4.7 (Arabidopsis thaliana (Mouse-ear cress)).